Consider the following 115-residue polypeptide: Biotrophy-associated secreted protein 1 (115 aa).

Residues 1–22 form the signal peptide; that stretch reads MHVFNFAALFTVLATFTATAAA. The tract at residues 24-115 is disordered; it reads DQGSNTFDQR…GIRRVENYYP (92 aa). 2 stretches are compositionally biased toward basic and acidic residues: residues 46-55 and 91-115; these read IREEKQENVG and QQKERAERKQDRGLNGIRRVENYYP.

It is found in the secreted. The protein localises to the host cytoplasm. Secreted effector involved in biotrophic colonization of plant cells. Induces an early, basal defense response in susceptible rice, including rapid callose deposition and ROS production in leaves and calli. Also promotes sporulation and mycelia growth suggesting a role across the whole process of interaction, from the biotrophic phase to sporulation. The polypeptide is Biotrophy-associated secreted protein 1 (Pyricularia oryzae (strain 70-15 / ATCC MYA-4617 / FGSC 8958) (Rice blast fungus)).